The primary structure comprises 338 residues: Galaxin (338 aa).

The N-terminal stretch at 1 to 23 is a signal peptide; it reads MKPSGAFLSLCVVLLSLATHCFS. Basic and acidic residues predominate over residues 30 to 47; it reads RRDAHSDTNALKSRDRRQ. Residues 30–50 are disordered; sequence RRDAHSDTNALKSRDRRQAPA.

In terms of tissue distribution, component of the acid-insoluble organic matrix of the aragonitic skeleton (at protein level). Initially, expressed in an aboral submarginal ring and then along calcifying septa.

It is found in the secreted. The protein is Galaxin of Acropora millepora (Staghorn coral).